Reading from the N-terminus, the 1054-residue chain is MGWKILPVCLSLLLPVVLIQQVSSQDLSSCAGRCGEGYSRDATCNCDYNCQHYMECCPDFKRVCSPELSCKGRCFESFARGRECDCDSQCKQYGKCCADYDSFCEEVHNSTSPSSKTAPTPAGASDTIKSTTKRSPKSPTTRTIKVVESEELTEEHSDSENQESSSSSSSSSSTIRKIKSSKNSANRELQKNPNVKDNKKNTPKKKPNPEPPAVDEAGSGLDNGEFKLTPPPPDPPTTPHSKVATSPKTTAAKPVTPKPSLAPNSETSKEASLASNKETTVETKETTATNKQSSASKKKTTSVKETRSAEKTSDKDVEPTSTTPKNSAPTTTKKPVTTTKESKFLPLPQEPEPTTAKEPPPTTKKPEPTTRKEPEPTTPKEPEPTTPKEPEPTTPKEPEPTTPKEPPPTTKKPEPTTPKEPGPTTPKEPEPTTTKEPEPTTTKEPESTTRKEPEPTTPKEPEPTTPKEPEPTTLKEPEPTTPKEPEPTTPKEPEPTTPKEPEPTTPKEPEPTTPKEPEPTTPKEPEPTTPKEPEPTTPKEPEPTTPKKPEPTTPKEPVPTTPKEPEPTTPKEPEPTTPKEPEPTTRKEPEPTTPKEPEPTTPKEPEPTTPKKPEPTTTSPKTTTLKATTLAPKVTAPAEEIQNKPEETTPASEDSDDSKTTLKPQKPTKAPKPTKKPTKAPKKPTSTKKPKTPKTRKPKTTPSPLKTTSATPELNTTPLEVMLPTTTIPKQTPNPETAEVNPDHEDADGGEGEKPLIPGPPVLFPTAIPGTDLLAGRLNQGININPMLSDETNLCNGKPVDGLTTLRNGTLVAFRGHYFWMLNPFRPPSPPRRITEVWGIPSPIDTVFTRCNCEGKTFFFKDSQYWRFTNDVVDPGYPKQIVKGFGGLTGKIVAALSIAKYKDRPESVYFFKRGGNIQQYTYKQEPMKKCTGRRPAINYSVYGEAAQVRRRRFERAVGPFQTHTFRIHYSVPMRVSYQDKGFLHNEVKVSTMWRGFPNVVTSAITLPNIRKPDGYDYYAFSKDQYYNIDVPTRTARAITTRSGQTLSKIWYNCP.

The N-terminal stretch at 1–24 is a signal peptide; sequence MGWKILPVCLSLLLPVVLIQQVSS. 2 SMB domains span residues 26-69 and 66-108; these read DLSS…PELS and PELS…EEVH. Intrachain disulfides connect Cys-30-Cys-34, Cys-30-Cys-46, Cys-34-Cys-64, Cys-44-Cys-46, Cys-44-Cys-57, Cys-50-Cys-56, Cys-57-Cys-64, Cys-70-Cys-74, Cys-70-Cys-86, Cys-74-Cys-104, Cys-84-Cys-86, Cys-84-Cys-97, Cys-90-Cys-96, and Cys-97-Cys-104. Asn-109 is a glycosylation site (N-linked (GlcNAc...) asparagine). Low complexity predominate over residues 110 to 125; that stretch reads STSPSSKTAPTPAGAS. The interval 110-764 is disordered; sequence STSPSSKTAP…PLIPGPPVLF (655 aa). O-linked (GalNAc...) serine glycosylation is present at Ser-135. Positions 162–175 are enriched in low complexity; it reads QESSSSSSSSSSTI. Residues 188-200 show a composition bias toward basic and acidic residues; that stretch reads ELQKNPNVKDNKK. Positions 229 to 238 are enriched in pro residues; it reads TPPPPDPPTT. Residues Thr-237 and Thr-250 are each glycosylated (O-linked (GalNAc...) threonine). Over residues 286–295 the composition is skewed to low complexity; that stretch reads TTATNKQSSA. A glycan (O-linked (GalNAc...) threonine) is linked at Thr-301. Ser-302 is a glycosylation site (O-linked (GalNAc...) serine). Residues 302-318 show a composition bias toward basic and acidic residues; that stretch reads SVKETRSAEKTSDKDVE. A glycan (O-linked (GalNAc...) threonine) is linked at Thr-306. Ser-313 is a glycosylation site (O-linked (GalNAc...) serine). One copy of the 1; approximate repeat lies at 317–324; the sequence is VEPTSTTP. Positions 317–618 are 37 X 8 AA repeats of K-X-P-X-P-T-T-X; that stretch reads VEPTSTTPKN…TPKKPEPTTT (302 aa). Over residues 319–328 the composition is skewed to polar residues; the sequence is PTSTTPKNSA. One copy of the 2; approximate repeat lies at 325-332; sequence KNSAPTTT. Ser-327 is a glycosylation site (O-linked (GalNAc...) serine). Residues 329–339 are compositionally biased toward low complexity; it reads PTTTKKPVTTT. Residues Thr-330, Thr-338, Thr-354, Thr-362, Thr-369, Thr-377, Thr-378, Thr-385, Thr-386, Thr-393, and Thr-394 are each glycosylated (O-linked (GalNAc...) threonine). The 3; approximate repeat unit spans residues 333 to 340; sequence KKPVTTTK. One copy of the 4; approximate repeat lies at 349–356; the sequence is QEPEPTTA. Repeat unit 5 spans residues 357 to 364; sequence KEPPPTTK. The segment covering 364–399 has biased composition (basic and acidic residues); that stretch reads KKPEPTTRKEPEPTTPKEPEPTTPKEPEPTTPKEPE. The 6; approximate repeat unit spans residues 365–371; the sequence is KPEPTTR. 5 repeat units span residues 372–379, 380–387, 388–395, 396–403, and 404–411. The segment covering 400–426 has biased composition (pro residues); that stretch reads PTTPKEPPPTTKKPEPTTPKEPGPTTP. Residues 412-418 form a 12; approximate repeat; it reads KPEPTTP. 8 O-linked (GalNAc...) threonine glycosylation sites follow: Thr-416, Thr-417, Thr-424, Thr-432, Thr-433, Thr-440, Thr-441, and Thr-448. 3 consecutive repeat copies span residues 419 to 426, 427 to 434, and 435 to 442. Residues 427 to 550 show a composition bias toward basic and acidic residues; sequence KEPEPTTTKE…PEPTTPKKPE (124 aa). A 16; approximate repeat occupies 443 to 450; it reads KEPESTTR. Repeat copies occupy residues 451–458, 459–466, 467–474, 475–482, 483–490, 491–498, 499–506, 507–514, 515–522, 523–530, 531–538, 539–546, 547–554, 555–562, 563–570, 571–578, 579–586, 587–594, 595–602, 603–610, and 611–618. O-linked (GalNAc...) threonine glycosylation is found at Thr-472, Thr-480, Thr-481, Thr-488, Thr-489, Thr-496, Thr-497, Thr-504, Thr-505, Thr-512, Thr-520, Thr-521, Thr-528, and Thr-529. Positions 551-562 are enriched in pro residues; the sequence is PTTPKEPVPTTP. O-linked (GalNAc...) threonine glycosylation is found at Thr-553, Thr-560, Thr-561, Thr-568, Thr-569, Thr-576, and Thr-577. Over residues 563-614 the composition is skewed to basic and acidic residues; sequence KEPEPTTPKEPEPTTPKEPEPTTRKEPEPTTPKEPEPTTPKEPEPTTPKKPE. Residues Thr-592, Thr-600, and Thr-601 are each glycosylated (O-linked (GalNAc...) threonine). The span at 615-624 shows a compositional bias: low complexity; it reads PTTTSPKTTT. 5 O-linked (GalNAc...) threonine glycosylation sites follow: Thr-622, Thr-624, Thr-628, Thr-629, and Thr-692. Residues 672–699 are compositionally biased toward basic residues; that stretch reads KPTKKPTKAPKKPTSTKKPKTPKTRKPK. The segment covering 700–712 has biased composition (low complexity); sequence TTPSPLKTTSATP. The span at 713–735 shows a compositional bias: polar residues; the sequence is ELNTTPLEVMLPTTTIPKQTPNP. A disulfide bond links Cys-795 and Cys-1053. Hemopexin repeat units follow at residues 797–840 and 841–888; these read GKPV…VWGI and PSPI…FGGL. An N-linked (GlcNAc...) asparagine glycan is attached at Asn-808. The O-linked (GalNAc...) threonine glycan is linked to Thr-810. Asn-938 is a glycosylation site (N-linked (GlcNAc...) asparagine).

Homodimer; disulfide-linked. N-glycosylated. Post-translationally, O-glycosylated; contains glycosaminoglycan chondroitin sulfate and keratan sulfate. O-glycosylated with sialylated oligosaccharides which are predominantly represented by the monosialylated core type I structure, NeuNAcalpha2-3Galbeta1-3GalNAc, with smaller amounts of disialylated O-glycans. In terms of processing, the disulfide bond between Cys-795 and Cys-1053 is essential for protein cleavage. Proteolytically cleaved by cathepsin CTSG. As to expression, highly expressed in cartilage, bone and liver and weakly expressed in heart, brain and muscle. Expressed in the surface chondrocytes and in synovial intimal cells. Isoform B is expressed in bone, small intestine, muscle, testis, heart, liver and lung. Isoform C and isoform D are widely expressed.

It localises to the secreted. Its function is as follows. Plays a role in boundary lubrication within articulating joints. Prevents protein deposition onto cartilage from synovial fluid by controlling adhesion-dependent synovial growth and inhibiting the adhesion of synovial cells to the cartilage surface. This Mus musculus (Mouse) protein is Proteoglycan 4 (Prg4).